A 246-amino-acid polypeptide reads, in one-letter code: MSKKHCSELLPNKMFRNQDSKYLIPVQKEAPPVTTLPMKASTVKSPHNCEAILRDADPPISLSSVNLSEQLRSGVFLKPKKQIKYWVDERNSNCFMLFAKNLSITWSDDVNYWTWFTEKESPNENVEAVGLKNVCWLDITGKFDTRNLTPGIVYEVVFKVKLEDPAYGWDTPVNLKLVLPNGKEKPQEKKVSLRELPRYKWVDVRVGEFVPEKSAAGEITFSMYEHAAGVWKKGLSLKGVAIRPKQ.

Vascular tissues, specifically in phloem companion cell-sieve element complexes.

In Arabidopsis thaliana (Mouse-ear cress), this protein is Protein PHLOEM PROTEIN 2-LIKE A1 (PP2A1).